A 591-amino-acid polypeptide reads, in one-letter code: MAERTHACGKVTVEAVGQTVQLKGWVQKRRDLGGLIFIDLRDRTGIVQVVFNPETSKEALEVAETIRSEYVLHVEGTVVERGEGAINDNMATGRIEVQATKVSVLNAAKTTPIIIADDTDASEDVRLKYRYLDLRRPVMFNTFKMRHDVTKTIRNFLDTEEFLEVETPILTKSTPEGARDYLVPSRVHDGEFYALPQSPQLFKQLLMVGGFERYYQVARCFRDEDLRADRQPEFTQIDIEASFLTQDEILDMMERMMTKVMKDAKGVEVSAPFPRMKYADAMARYGSDKPDTRFEMELTDLSEFAAGCGFKVFTSAVESGGQVKAINAKGAASKYSRKDIDALTEFVKVYGAKGLAWLKVEEDGLKGPIAKFFGEEDASVLMNTLEATAGDLLLFVADKKSVVADSLGALRLRLGKELELIDESKFNFLWVTDWPLLEYDEDADRYFAAHHPFTMPFREDVELLETAPEKARAQAYDLVLNGYELGGGSLRIYERDVQEKMFKALGFSQEEAQEQFGFLLEAFEYGTPPHGGIALGLDRLVMLLAGRTNLRDTIAFPKTASASCLLTEAPSPVAEAQLEELNLKLNVKEEK.

Glutamate 176 is a binding site for L-aspartate. The tract at residues 200–203 (QLFK) is aspartate. Residue arginine 222 coordinates L-aspartate. ATP-binding positions include 222 to 224 (RDE) and glutamine 231. Histidine 450 contributes to the L-aspartate binding site. Glutamate 484 lines the ATP pocket. Arginine 491 contributes to the L-aspartate binding site. 536-539 (GLDR) provides a ligand contact to ATP.

It belongs to the class-II aminoacyl-tRNA synthetase family. Type 1 subfamily. As to quaternary structure, homodimer.

It is found in the cytoplasm. It catalyses the reaction tRNA(Asx) + L-aspartate + ATP = L-aspartyl-tRNA(Asx) + AMP + diphosphate. Its function is as follows. Aspartyl-tRNA synthetase with relaxed tRNA specificity since it is able to aspartylate not only its cognate tRNA(Asp) but also tRNA(Asn). Reaction proceeds in two steps: L-aspartate is first activated by ATP to form Asp-AMP and then transferred to the acceptor end of tRNA(Asp/Asn). In Bacillus anthracis (strain A0248), this protein is Aspartate--tRNA(Asp/Asn) ligase.